The sequence spans 217 residues: MTLKFEPTQLRAYFVCGTQDVPGQDLNMVVQTALDAGVTAFQYRDKGNSQLTTVERFALGQQLRERCAQAHVPFIVDDDVELALALQADGIHVGQKDDWVTQVIQRVANQMFVGLSCSTLAEVQIANQLEGIAYLGSGPIFPTTSKADADPVVGLTGLRQLVMTASCPVVAIGGITVAQLPAIAATGAAGAAVISMLTRSPDMAATVKAMLTATEGH.

4-amino-2-methyl-5-(diphosphooxymethyl)pyrimidine contacts are provided by residues 42-46 (QYRDK) and aspartate 77. Aspartate 78 and aspartate 97 together coordinate Mg(2+). A 4-amino-2-methyl-5-(diphosphooxymethyl)pyrimidine-binding site is contributed by serine 116. 143 to 145 (TTS) is a 2-[(2R,5Z)-2-carboxy-4-methylthiazol-5(2H)-ylidene]ethyl phosphate binding site. A 4-amino-2-methyl-5-(diphosphooxymethyl)pyrimidine-binding site is contributed by lysine 146. Residues glycine 174 and 194 to 195 (IS) each bind 2-[(2R,5Z)-2-carboxy-4-methylthiazol-5(2H)-ylidene]ethyl phosphate.

It belongs to the thiamine-phosphate synthase family. It depends on Mg(2+) as a cofactor.

The enzyme catalyses 2-[(2R,5Z)-2-carboxy-4-methylthiazol-5(2H)-ylidene]ethyl phosphate + 4-amino-2-methyl-5-(diphosphooxymethyl)pyrimidine + 2 H(+) = thiamine phosphate + CO2 + diphosphate. It carries out the reaction 2-(2-carboxy-4-methylthiazol-5-yl)ethyl phosphate + 4-amino-2-methyl-5-(diphosphooxymethyl)pyrimidine + 2 H(+) = thiamine phosphate + CO2 + diphosphate. It catalyses the reaction 4-methyl-5-(2-phosphooxyethyl)-thiazole + 4-amino-2-methyl-5-(diphosphooxymethyl)pyrimidine + H(+) = thiamine phosphate + diphosphate. It participates in cofactor biosynthesis; thiamine diphosphate biosynthesis; thiamine phosphate from 4-amino-2-methyl-5-diphosphomethylpyrimidine and 4-methyl-5-(2-phosphoethyl)-thiazole: step 1/1. In terms of biological role, condenses 4-methyl-5-(beta-hydroxyethyl)thiazole monophosphate (THZ-P) and 2-methyl-4-amino-5-hydroxymethyl pyrimidine pyrophosphate (HMP-PP) to form thiamine monophosphate (TMP). In Lactiplantibacillus plantarum (strain ATCC BAA-793 / NCIMB 8826 / WCFS1) (Lactobacillus plantarum), this protein is Thiamine-phosphate synthase.